The chain runs to 835 residues: Protein bicaudal D homolog 1 (835 aa).

The stretch at 1–264 (MAAEEALKTV…YINLSDSHIS (264 aa)) forms a coiled coil. The tract at residues 278 to 297 (EPNNDDKMNGHIHGPLGKLN) is disordered. Positions 320-519 (ELNISEIQKL…TFSEELAQLY (200 aa)) form a coiled coil. Disordered stretches follow at residues 545 to 616 (RSGS…LDTS) and 800 to 835 (DHEQ…SAHN). Low complexity predominate over residues 557 to 572 (GLLSPRLSRRGVSSPV). A compositionally biased stretch (basic and acidic residues) spans 581–590 (VSKENTETSK). A compositionally biased stretch (low complexity) spans 591–604 (EPSPTKTPTISPVI). The stretch at 663-803 (IDKDKEALME…LEDLEFDHEQ (141 aa)) forms a coiled coil. An interaction with RAB6A region spans residues 663–803 (IDKDKEALME…LEDLEFDHEQ (141 aa)).

It belongs to the BicD family. As to quaternary structure, interacts with RAB6A. Interacts (via C-terminus) with RAB6B (GTP-bound); the interaction is direct. Interacts with CLIP-115 and KIFC2. As to expression, expressed in the brain, heart and skeletal muscle.

It is found in the golgi apparatus. In terms of biological role, regulates coat complex coatomer protein I (COPI)-independent Golgi-endoplasmic reticulum transport by recruiting the dynein-dynactin motor complex. This Mus musculus (Mouse) protein is Protein bicaudal D homolog 1 (Bicd1).